Reading from the N-terminus, the 288-residue chain is uncharacterized protein (288 aa).

This is an uncharacterized protein from Mycobacterium tuberculosis (strain CDC 1551 / Oshkosh).